The chain runs to 145 residues: Small ribosomal subunit protein uS19 (145 aa).

Ala2 is modified (N-acetylalanine). A Glycyl lysine isopeptide (Lys-Gly) (interchain with G-Cter in SUMO2) cross-link involves residue Lys108.

The protein belongs to the universal ribosomal protein uS19 family. In terms of assembly, component of the small ribosomal subunit.

It is found in the cytoplasm. Component of the small ribosomal subunit. The ribosome is a large ribonucleoprotein complex responsible for the synthesis of proteins in the cell. The polypeptide is Small ribosomal subunit protein uS19 (RPS15) (Mesocricetus auratus (Golden hamster)).